The primary structure comprises 181 residues: Large ribosomal subunit protein uL10 (181 aa).

The protein belongs to the universal ribosomal protein uL10 family. As to quaternary structure, part of the ribosomal stalk of the 50S ribosomal subunit. The N-terminus interacts with L11 and the large rRNA to form the base of the stalk. The C-terminus forms an elongated spine to which L12 dimers bind in a sequential fashion forming a multimeric L10(L12)X complex.

In terms of biological role, forms part of the ribosomal stalk, playing a central role in the interaction of the ribosome with GTP-bound translation factors. The polypeptide is Large ribosomal subunit protein uL10 (Protochlamydia amoebophila (strain UWE25)).